A 265-amino-acid chain; its full sequence is Orphan methyltransferase M.BamHII (265 aa).

It belongs to the N(4)/N(6)-methyltransferase family. N(4) subfamily.

It carries out the reaction a 2'-deoxycytidine in DNA + S-adenosyl-L-methionine = an N(4)-methyl-2'-deoxycytidine in DNA + S-adenosyl-L-homocysteine + H(+). Functionally, a beta subtype methylase, recognizes the double-stranded sequence 5'-GGATCC-3', methylates C-? on both strands. No endonuclease has been identified for this methylase, although it is speculated it might protect against BamHI. This Bacillus amyloliquefaciens (Bacillus velezensis) protein is Orphan methyltransferase M.BamHII (bamHIIM).